The sequence spans 109 residues: Fluorescence recovery protein (109 aa).

As to quaternary structure, probably a dimer, interacts with the C-terminal domain of OCP-R.

It localises to the cellular thylakoid membrane. Destabilizes orange carotenoid protein-R form (OCP-R), the FRP-OCP interaction accelerates the OCP-R to OCP-O conversion. Increases fluorescence recovery following non-photochemical quenching (NPQ) by OCP, most probably by destabilizing OCP-R binding to the phycobilisome core. This Synechocystis sp. (strain ATCC 27184 / PCC 6803 / Kazusa) protein is Fluorescence recovery protein (frp).